The primary structure comprises 365 residues: Histidinol-phosphate aminotransferase (365 aa).

K220 is modified (N6-(pyridoxal phosphate)lysine).

It belongs to the class-II pyridoxal-phosphate-dependent aminotransferase family. Histidinol-phosphate aminotransferase subfamily. As to quaternary structure, homodimer. Requires pyridoxal 5'-phosphate as cofactor.

It carries out the reaction L-histidinol phosphate + 2-oxoglutarate = 3-(imidazol-4-yl)-2-oxopropyl phosphate + L-glutamate. The protein operates within amino-acid biosynthesis; L-histidine biosynthesis; L-histidine from 5-phospho-alpha-D-ribose 1-diphosphate: step 7/9. The chain is Histidinol-phosphate aminotransferase from Neisseria meningitidis serogroup B (strain ATCC BAA-335 / MC58).